An 858-amino-acid polypeptide reads, in one-letter code: Heat shock protein 105 kDa (858 aa).

S2 bears the N-acetylserine mark. K471 carries the post-translational modification N6-acetyllysine. Disordered regions lie at residues 500–585 (KVPT…PPEA) and 801–858 (VTQP…MDLD). Acidic residues predominate over residues 504–515 (EEEDGSSLEADM). Residues S509 and S510 each carry the phosphoserine modification. A compositionally biased stretch (polar residues) spans 533–549 (QQDNSEAGTQPQVQTDG). At S558 the chain carries Phosphoserine. Phosphothreonine is present on T562. Basic and acidic residues-rich tracts occupy residues 564 to 585 (EESK…PPEA) and 806 to 815 (PKIESPKLER). S810 carries the phosphoserine modification. A Phosphothreonine modification is found at T816.

The protein belongs to the heat shock protein 70 family. As to quaternary structure, interacts with HSPA8/HSC70. Interacts with HSPA1A (via NBD) and HSPA1B (via NBD). Post-translationally, phosphorylation on Ser-509 may be important for regulation of the HSPA8/HSC70 chaperone activity. As to expression, expressed in neurons in the cerebrum and Purkinje cells in the cerebellum (at protein level). Expressed in testis and no expression or only low-level expression in liver, spleen, lung, and kidney (at protein level). Highly expressed in the brain and moderately expressed in lung, heart, thymus, spleen, liver, and small intestine.

It localises to the cytoplasm. The protein resides in the nucleus. Acts as a nucleotide-exchange factor (NEF) for chaperone proteins HSPA1A and HSPA1B, promoting the release of ADP from HSPA1A/B thereby triggering client/substrate protein release. Prevents the aggregation of denatured proteins in cells under severe stress, on which the ATP levels decrease markedly. Inhibits HSPA8/HSC70 ATPase and chaperone activities. The polypeptide is Heat shock protein 105 kDa (Hsph1) (Mus musculus (Mouse)).